The chain runs to 366 residues: Flagellar P-ring protein (366 aa).

A signal peptide spans Met-1 to Ala-19.

Belongs to the FlgI family. In terms of assembly, the basal body constitutes a major portion of the flagellar organelle and consists of four rings (L,P,S, and M) mounted on a central rod.

It is found in the periplasm. It localises to the bacterial flagellum basal body. In terms of biological role, assembles around the rod to form the L-ring and probably protects the motor/basal body from shearing forces during rotation. The sequence is that of Flagellar P-ring protein from Ruegeria pomeroyi (strain ATCC 700808 / DSM 15171 / DSS-3) (Silicibacter pomeroyi).